We begin with the raw amino-acid sequence, 92 residues long: Small ribosomal subunit protein bS20 (92 aa).

A disordered region spans residues 1-25 (MANSAQARKRARQAAKANSHNSALR).

Belongs to the bacterial ribosomal protein bS20 family.

In terms of biological role, binds directly to 16S ribosomal RNA. The sequence is that of Small ribosomal subunit protein bS20 from Paraburkholderia phytofirmans (strain DSM 17436 / LMG 22146 / PsJN) (Burkholderia phytofirmans).